The chain runs to 172 residues: 3-hydroxydecanoyl-[acyl-carrier-protein] dehydratase (172 aa).

Histidine 71 is a catalytic residue.

This sequence belongs to the thioester dehydratase family. FabA subfamily. As to quaternary structure, homodimer.

It is found in the cytoplasm. The enzyme catalyses a (3R)-hydroxyacyl-[ACP] = a (2E)-enoyl-[ACP] + H2O. The catalysed reaction is (3R)-hydroxydecanoyl-[ACP] = (2E)-decenoyl-[ACP] + H2O. It carries out the reaction (2E)-decenoyl-[ACP] = (3Z)-decenoyl-[ACP]. It functions in the pathway lipid metabolism; fatty acid biosynthesis. In terms of biological role, necessary for the introduction of cis unsaturation into fatty acids. Catalyzes the dehydration of (3R)-3-hydroxydecanoyl-ACP to E-(2)-decenoyl-ACP and then its isomerization to Z-(3)-decenoyl-ACP. Can catalyze the dehydratase reaction for beta-hydroxyacyl-ACPs with saturated chain lengths up to 16:0, being most active on intermediate chain length. The chain is 3-hydroxydecanoyl-[acyl-carrier-protein] dehydratase from Yersinia enterocolitica serotype O:8 / biotype 1B (strain NCTC 13174 / 8081).